Consider the following 299-residue polypeptide: Biotin synthase (299 aa).

One can recognise a Radical SAM core domain in the interval 22–252 (TSNLKLDLCS…NVTIKIAAGR (231 aa)). [4Fe-4S] cluster is bound by residues C40, C44, and C47. [2Fe-2S] cluster is bound by residues C116, C176, and K247.

The protein belongs to the radical SAM superfamily. Biotin synthase family. Homodimer. [4Fe-4S] cluster serves as cofactor. The cofactor is [2Fe-2S] cluster.

It catalyses the reaction (4R,5S)-dethiobiotin + (sulfur carrier)-SH + 2 reduced [2Fe-2S]-[ferredoxin] + 2 S-adenosyl-L-methionine = (sulfur carrier)-H + biotin + 2 5'-deoxyadenosine + 2 L-methionine + 2 oxidized [2Fe-2S]-[ferredoxin]. It functions in the pathway cofactor biosynthesis; biotin biosynthesis; biotin from 7,8-diaminononanoate: step 2/2. Its function is as follows. Catalyzes the conversion of dethiobiotin (DTB) to biotin by the insertion of a sulfur atom into dethiobiotin via a radical-based mechanism. This chain is Biotin synthase, found in Thermotoga petrophila (strain ATCC BAA-488 / DSM 13995 / JCM 10881 / RKU-1).